A 562-amino-acid polypeptide reads, in one-letter code: Protein FAM83D-B (562 aa).

Residues 424–472 (ITTQTTETSQCTTQTPAPTSSVARLSNSSNSSSSSFSSASTTSTGSNCS) are disordered. Residues 425 to 472 (TTQTTETSQCTTQTPAPTSSVARLSNSSNSSSSSFSSASTTSTGSNCS) show a composition bias toward low complexity.

It belongs to the FAM83 family.

The protein resides in the cytoplasm. It localises to the cytoskeleton. Its subcellular location is the spindle. It is found in the spindle pole. Its function is as follows. May regulate cell proliferation, growth, migration and epithelial to mesenchymal transition. May also be important for proper chromosome congression and alignment during mitosis. The protein is Protein FAM83D-B of Xenopus laevis (African clawed frog).